The sequence spans 293 residues: Pantothenate synthetase (293 aa).

Residue Met-30–His-37 coordinates ATP. His-37 (proton donor) is an active-site residue. Gln-61 is a (R)-pantoate binding site. A beta-alanine-binding site is contributed by Gln-61. Residue Gly-149–Asp-152 coordinates ATP. Gln-155 lines the (R)-pantoate pocket. ATP is bound by residues Val-178 and Met-186–Arg-189.

Belongs to the pantothenate synthetase family. Homodimer.

It localises to the cytoplasm. The catalysed reaction is (R)-pantoate + beta-alanine + ATP = (R)-pantothenate + AMP + diphosphate + H(+). The protein operates within cofactor biosynthesis; (R)-pantothenate biosynthesis; (R)-pantothenate from (R)-pantoate and beta-alanine: step 1/1. Functionally, catalyzes the condensation of pantoate with beta-alanine in an ATP-dependent reaction via a pantoyl-adenylate intermediate. In Vibrio cholerae serotype O1 (strain ATCC 39541 / Classical Ogawa 395 / O395), this protein is Pantothenate synthetase.